Consider the following 666-residue polypeptide: Probable potassium transport system protein Kup (666 aa).

12 consecutive transmembrane segments (helical) span residues 16 to 36 (GFII…LYTM), 58 to 78 (ISLI…LIAL), 98 to 118 (ISPW…SDGA), 141 to 161 (IYQN…VLFG), 165 to 185 (FGTG…FSFL), 221 to 241 (IFIL…YSDL), 253 to 273 (WPFV…WILA), 299 to 319 (LATL…FTLI), 343 to 363 (LYIP…VLAF), 373 to 393 (YGLA…YYLI), 399 to 419 (PILA…FFLA), and 424 to 444 (FMHG…VMFI).

Belongs to the HAK/KUP transporter (TC 2.A.72) family.

It localises to the cell membrane. It carries out the reaction K(+)(in) + H(+)(in) = K(+)(out) + H(+)(out). Functionally, transport of potassium into the cell. Likely operates as a K(+):H(+) symporter. In Streptococcus pyogenes serotype M28 (strain MGAS6180), this protein is Probable potassium transport system protein Kup.